The sequence spans 729 residues: Solute carrier family 15 member 2 (729 aa).

Positions 1–34 (MNPFQQNESKETLFSPVSTEETPPRLSSPAKKTP) are disordered. Over 1-57 (MNPFQQNESKETLFSPVSTEETPPRLSSPAKKTPPKICGSNYPLSIAFIVVNEFCER) the chain is Cytoplasmic. Position 9 is a phosphoserine (Ser9). The residue at position 12 (Thr12) is a Phosphothreonine. A Phosphoserine modification is found at Ser28. A helical transmembrane segment spans residues 58–78 (FSYYGMKAVLTLYFLYFLHWN). The Extracellular portion of the chain corresponds to 79–87 (EDTSTSVYH). A helical membrane pass occupies residues 88-108 (AFSSLCYFTPILGAAIADSWL). The Cytoplasmic portion of the chain corresponds to 109–113 (GKFKT). Residues 114–134 (IIYLSLVNVLGHVIKSLSAFP) form a helical membrane-spanning segment. Residues 135–139 (ILGGK) are Extracellular-facing. The helical transmembrane segment at 140-160 (VVHTVLSLVGLCLIALGTGGI) threads the bilayer. Residues 161–183 (KPCVAAFGGDQFEEKHAEERTRY) lie on the Cytoplasmic side of the membrane. The chain crosses the membrane as a helical span at residues 184–204 (FSGFYLAINAGSLISTFITPM). The Extracellular portion of the chain corresponds to 205-217 (LRGDVQCFGEDCY). The helical transmembrane segment at 218–238 (ALAFGVPGLLMVIALVVFAMG) threads the bilayer. The Cytoplasmic portion of the chain corresponds to 239–295 (SKMYKKPPPEGNIVAQVVKCIWFAISNRFKNRSEDIPKRQHWLDWAAEKYPKQLIMD). Residues 296-316 (VKTLTRVLFLYIPLPMFWALL) form a helical membrane-spanning segment. Residues 317-343 (DQQGSRWTLQATKMNGNLGFFVLQPDQ) lie on the Extracellular side of the membrane. The chain crosses the membrane as a helical span at residues 344-364 (MQVLNPLLVLIFIPLFDLVIY). Residues 365-380 (RLISKCGINFTSLRKM) are Cytoplasmic-facing. Residues 381 to 401 (AVGMVLACLAFAAAATVEIKI) form a helical membrane-spanning segment. The Extracellular portion of the chain corresponds to 402–611 (NEMAPPQPGS…PANKVSIAWQ (210 aa)). The extracellular domain (ECD) stretch occupies residues 402–611 (NEMAPPQPGS…PANKVSIAWQ (210 aa)). N-linked (GlcNAc...) asparagine glycosylation is found at Asn435, Asn472, Asn508, Asn528, and Asn587. Residues 612–632 (LPQYALVTAGEVMFSVTGLEF) traverse the membrane as a helical segment. Over 633-643 (SYSQAPSSMKS) the chain is Cytoplasmic. Residues 644–664 (VLQAAWLLTVAIGNIIVLVVA) form a helical membrane-spanning segment. Residues 665 to 674 (QFSGLVQWAE) are Extracellular-facing. A helical membrane pass occupies residues 675–695 (FVLFSCLLLVVCLIFSIMGYY). Residues 696–729 (YIPIKSEDIQGPEDKQIPHMQGNMINLETKKTKL) lie on the Cytoplasmic side of the membrane.

Belongs to the major facilitator superfamily. Proton-dependent oligopeptide transporter (POT/PTR) (TC 2.A.17) family. In terms of assembly, interacts (via extracellular domain region) with trypsin. As to expression, strongly expressed in kidney. Also detected in brain, lung, liver and heart.

Its subcellular location is the apical cell membrane. The protein localises to the cytoplasmic vesicle. The protein resides in the phagosome membrane. It is found in the cell membrane. It catalyses the reaction a dipeptide(out) + 2 H(+)(out) = a dipeptide(in) + 2 H(+)(in). The enzyme catalyses N-acetyl-D-muramoyl-L-alanyl-D-isoglutamine(out) + 3 H(+)(out) = N-acetyl-D-muramoyl-L-alanyl-D-isoglutamine(in) + 3 H(+)(in). It carries out the reaction glycyl-L-leucine(out) + 2 H(+)(out) = glycyl-L-leucine(in) + 2 H(+)(in). The catalysed reaction is glycyl-L-lysine(out) + 2 H(+)(out) = glycyl-L-lysine(in) + 2 H(+)(in). It catalyses the reaction glycyl-L-glutamate(out) + 3 H(+)(out) = glycyl-L-glutamate(in) + 3 H(+)(in). The enzyme catalyses L-alanyl-L-alanine(out) + 2 H(+)(out) = L-alanyl-L-alanine(in) + 2 H(+)(in). It carries out the reaction an L-amino acid tripeptide(out) + 2 H(+)(out) = an L-amino acid tripeptide(in) + 2 H(+)(in). The catalysed reaction is carnosine(out) + 2 H(+)(out) = carnosine(in) + 2 H(+)(in). In terms of biological role, proton-coupled amino-acid transporter that transports oligopeptides of 2 to 4 amino acids with a preference for dipeptides. Transports neutral and anionic dipeptides with a proton to peptide stoichiometry of 2:1 or 3:1. In kidney, involved in the absorption of circulating di- and tripeptides from the glomerular filtrate. Can also transport beta-lactam antibiotics, such as the aminocephalosporin cefadroxil, and other antiviral and anticancer drugs. Transports the dipeptide-like aminopeptidase inhibitor bestatin. Also able to transport carnosine. Involved in innate immunity by promoting the detection of microbial pathogens by NOD-like receptors (NLRs). Mediates transport of bacterial peptidoglycans across the plasma membrane or, in macrophages, the phagosome membrane: catalyzes the transport of certain bacterial peptidoglycans, such as muramyl dipeptide (MDP), the NOD2 ligand. In Oryctolagus cuniculus (Rabbit), this protein is Solute carrier family 15 member 2.